A 344-amino-acid polypeptide reads, in one-letter code: Uroporphyrinogen decarboxylase (344 aa).

Substrate-binding positions include 26–30, Phe45, Asp75, Tyr151, Ser206, and His320; that span reads RQAGR.

The protein belongs to the uroporphyrinogen decarboxylase family. Homodimer.

It localises to the cytoplasm. It catalyses the reaction uroporphyrinogen III + 4 H(+) = coproporphyrinogen III + 4 CO2. The protein operates within porphyrin-containing compound metabolism; protoporphyrin-IX biosynthesis; coproporphyrinogen-III from 5-aminolevulinate: step 4/4. Functionally, catalyzes the decarboxylation of four acetate groups of uroporphyrinogen-III to yield coproporphyrinogen-III. In Staphylococcus haemolyticus (strain JCSC1435), this protein is Uroporphyrinogen decarboxylase.